The chain runs to 365 residues: MAEKEQPLKAVQVEALVVMKIIKHSTQLFPTTATGSLVGMDVRGTLEVTNAFPFPIVDIPADSHLDGAPANAAAAAPRAKSNAVYQSEMIKMLREVNIDANNVGWYTSANMGNFVNLNIIENQYFYQKELNERTVALVHDVSRSSQGALSLRAFRLSPQFMAAFKENKFTTENLQKSNLRYQDIFVELPVQIHNSHLLTSYLHQLPSPPPAENLDLPPSLAALTNDPLASSSLLTPNFDNLALSIDPFLEKNCDMLLESIETHHTENNNFQYYQRSLAREQTKIAAWQAKRKAENATRAQLKQPLLAEDEWQRLFKLPQEPSRLESMLNTRQVEQYSRQIDGFVSATTGKMFAVRGNLLPGETQV.

An MPN domain is found at 11–160 (VQVEALVVMK…LRAFRLSPQF (150 aa)). The stretch at 273–303 (YQRSLAREQTKIAAWQAKRKAENATRAQLKQ) forms a coiled coil.

It belongs to the eIF-3 subunit H family. As to quaternary structure, component of the eukaryotic translation initiation factor 3 (eIF-3) complex.

The protein resides in the cytoplasm. Component of the eukaryotic translation initiation factor 3 (eIF-3) complex, which is involved in protein synthesis of a specialized repertoire of mRNAs and, together with other initiation factors, stimulates binding of mRNA and methionyl-tRNAi to the 40S ribosome. The eIF-3 complex specifically targets and initiates translation of a subset of mRNAs involved in cell proliferation. In Coccidioides immitis (strain RS) (Valley fever fungus), this protein is Eukaryotic translation initiation factor 3 subunit H.